The sequence spans 1037 residues: MVDALNLGRRLRVRSTAYVAGEPVPFFWPMRTFIHHNPLYGLEDMPFEQAVRRGAELFHARMFLPRSDYQRWQREGKVRPETLKEEIGRRSQDLPPVPGVDWPRWLHALMQTPHDRDAVVRGVRAKDVHAALHGHPPSAQAVDVAALLPELEQRLHARTLPEAVDALWGTGLADELDELVIKNCLDFFDEDQSAWRMPGRERGLFSAWSEVTRRNARMVLRRLHVRHILDHVQDAESAVVYVMEEMGIGAEAWPTYFTRVLTRLHGWTGFVRWRASAKHYYWAQQYPADIVDLLAIRLVMGLALLQESARHRGTPMRRDDLGAVVRERGAECVLRYALHSGEVLPDWAQRIDDTLSRGNGARCHDLLQRYWPLWQARLGQQQAAALRELAAAANATAALDALAPEDVEGLLQGLRDFAPQEGMVWTLAMEGQAIDKLLTQVQAPQDPPPDKIPFAQAWFCIDVRAEPIRRHLERVGNYQTFGIAGFFGVPVGFLGYGKGSESHYCPAVITPKNLVLELPAALDPHNEDFVSTLGHVLHDLKKSVLSPYVTVEAVGMLFGLDLFGKTLAPLGYSRWRRRIDTEKPVTRLLVDKLSREQADSIIRTLQRAMIVKALHTELKIERERVDDDMIRELREIALRRRDGPTRLRTTFGVPQTQEAEFIDKLRQVYGVDADYTNHQLERLGRIGYSLDEQVNYVHTALTMIGLTQTFSRFVLVVGHGGKTENNPYESALDCGACGGASGIVNARVFAQMANKPAVRERLAAMGITIPEDTWFMPALHVTTTDAIELFDLDLLPPRHLVYLERLRDGLRAASRLTAAERMPKLLPEAKALEPAEALRLANRLAVDWAQVRPEWGLSGNVYGIVGRRALTENSDLQGSAFLLSYDWRCDPRGRLLENLLAAPVVVGQWINLEHFFSTVDNAHLGSGSKVYHNVSGRFGVMTGSLSDLRTGLPMQTVMREGRPYHEPMRLIALIEAPLDFAGRVLERVVKVKSLVLGGWIRAIVIDPTQGYKPFVFNNGQWEERTPLIAPAEKEYSA.

Residues C460, D462, H719, and C734 each contribute to the Zn(2+) site.

It belongs to the inorganic carbon transporter (TC 9.A.2) DabA family. As to quaternary structure, forms a complex with DabB. Requires Zn(2+) as cofactor.

The protein resides in the cell inner membrane. Its function is as follows. Part of an energy-coupled inorganic carbon pump. This Nitrobacter winogradskyi (strain ATCC 25391 / DSM 10237 / CIP 104748 / NCIMB 11846 / Nb-255) protein is Probable inorganic carbon transporter subunit DabA 1.